Consider the following 265-residue polypeptide: Hydroxyethylthiazole kinase (265 aa).

Met-43 is a binding site for substrate. ATP is bound by residues Lys-118 and Thr-165. Residue Gly-192 participates in substrate binding.

Belongs to the Thz kinase family. The cofactor is Mg(2+).

It catalyses the reaction 5-(2-hydroxyethyl)-4-methylthiazole + ATP = 4-methyl-5-(2-phosphooxyethyl)-thiazole + ADP + H(+). The protein operates within cofactor biosynthesis; thiamine diphosphate biosynthesis; 4-methyl-5-(2-phosphoethyl)-thiazole from 5-(2-hydroxyethyl)-4-methylthiazole: step 1/1. Catalyzes the phosphorylation of the hydroxyl group of 4-methyl-5-beta-hydroxyethylthiazole (THZ). The protein is Hydroxyethylthiazole kinase of Pyrococcus horikoshii (strain ATCC 700860 / DSM 12428 / JCM 9974 / NBRC 100139 / OT-3).